Consider the following 255-residue polypeptide: MNIAKIVREAREQSRLTTLDFATGIFDEFIQLHGDRSFRDDGAVVGGIGWLGDQAVTVVGIQKGKSLQDNLKRNFGQPHPEGYRKALRLMKQAEKFGRPVVTFINTAGAYPGVGAEERGQGEAIARNLMEMSDLKVPIIAIIIGEGGSGGALALAVADRVWMLENSIYAILSPEGFASILWKDGTRAMEAAELMKITSHELLEMDVVDKVISEIGLSSKELIKSVKKELQTELARLSQKPLEELLEERYQRFRKY.

Residues Met1–Arg235 enclose the CoA carboxyltransferase C-terminal domain.

Belongs to the AccA family. Acetyl-CoA carboxylase is a heterohexamer composed of biotin carboxyl carrier protein (AccB), biotin carboxylase (AccC) and two subunits each of ACCase subunit alpha (AccA) and ACCase subunit beta (AccD).

The protein resides in the cytoplasm. The enzyme catalyses N(6)-carboxybiotinyl-L-lysyl-[protein] + acetyl-CoA = N(6)-biotinyl-L-lysyl-[protein] + malonyl-CoA. The protein operates within lipid metabolism; malonyl-CoA biosynthesis; malonyl-CoA from acetyl-CoA: step 1/1. In terms of biological role, component of the acetyl coenzyme A carboxylase (ACC) complex. First, biotin carboxylase catalyzes the carboxylation of biotin on its carrier protein (BCCP) and then the CO(2) group is transferred by the carboxyltransferase to acetyl-CoA to form malonyl-CoA. The sequence is that of Acetyl-coenzyme A carboxylase carboxyl transferase subunit alpha from Streptococcus pneumoniae serotype 19F (strain G54).